A 1070-amino-acid polypeptide reads, in one-letter code: DNA-directed RNA polymerase subunit beta (1070 aa).

It belongs to the RNA polymerase beta chain family. In terms of assembly, in plastids the minimal PEP RNA polymerase catalytic core is composed of four subunits: alpha, beta, beta', and beta''. When a (nuclear-encoded) sigma factor is associated with the core the holoenzyme is formed, which can initiate transcription.

The protein resides in the plastid. It localises to the chloroplast. The enzyme catalyses RNA(n) + a ribonucleoside 5'-triphosphate = RNA(n+1) + diphosphate. DNA-dependent RNA polymerase catalyzes the transcription of DNA into RNA using the four ribonucleoside triphosphates as substrates. The chain is DNA-directed RNA polymerase subunit beta from Populus trichocarpa (Western balsam poplar).